We begin with the raw amino-acid sequence, 217 residues long: Probable GTP-binding protein EngB (217 aa).

One can recognise an EngB-type G domain in the interval A37–E214. Residues G45 to S52, G72 to E76, D92 to G95, T159 to D162, and T193 to S195 each bind GTP. Mg(2+) is bound by residues S52 and T74.

Belongs to the TRAFAC class TrmE-Era-EngA-EngB-Septin-like GTPase superfamily. EngB GTPase family. It depends on Mg(2+) as a cofactor.

Functionally, necessary for normal cell division and for the maintenance of normal septation. This is Probable GTP-binding protein EngB from Rhodopseudomonas palustris (strain BisB5).